A 396-amino-acid chain; its full sequence is CCA-adding enzyme (396 aa).

The ATP site is built by G27 and R30. Residues G27 and R30 each contribute to the CTP site. Mg(2+) contacts are provided by D40 and D42. Residues R111, D154, R157, R160, and R163 each coordinate ATP. Positions 111, 154, 157, 160, and 163 each coordinate CTP.

This sequence belongs to the tRNA nucleotidyltransferase/poly(A) polymerase family. Bacterial CCA-adding enzyme type 3 subfamily. In terms of assembly, homodimer. Mg(2+) serves as cofactor.

The enzyme catalyses a tRNA precursor + 2 CTP + ATP = a tRNA with a 3' CCA end + 3 diphosphate. The catalysed reaction is a tRNA with a 3' CCA end + 2 CTP + ATP = a tRNA with a 3' CCACCA end + 3 diphosphate. Its function is as follows. Catalyzes the addition and repair of the essential 3'-terminal CCA sequence in tRNAs without using a nucleic acid template. Adds these three nucleotides in the order of C, C, and A to the tRNA nucleotide-73, using CTP and ATP as substrates and producing inorganic pyrophosphate. tRNA 3'-terminal CCA addition is required both for tRNA processing and repair. Also involved in tRNA surveillance by mediating tandem CCA addition to generate a CCACCA at the 3' terminus of unstable tRNAs. While stable tRNAs receive only 3'-terminal CCA, unstable tRNAs are marked with CCACCA and rapidly degraded. The polypeptide is CCA-adding enzyme (Pediococcus pentosaceus (strain ATCC 25745 / CCUG 21536 / LMG 10740 / 183-1w)).